We begin with the raw amino-acid sequence, 109 residues long: Putative transposase MJ0856.1 (109 aa).

Zn(2+) is bound by residues cysteine 36, cysteine 39, cysteine 62, and cysteine 65.

This sequence belongs to the transposase 35 family.

This Methanocaldococcus jannaschii (strain ATCC 43067 / DSM 2661 / JAL-1 / JCM 10045 / NBRC 100440) (Methanococcus jannaschii) protein is Putative transposase MJ0856.1.